The following is a 423-amino-acid chain: T-box protein 2 (423 aa).

Positions 70–243 (LWQQFSQCGT…NNPFAKGFRD (174 aa)) form a DNA-binding region, T-box. 2 disordered regions span residues 238–324 (AKGF…PLRS) and 384–423 (VEATSEDSEEAEKPEVKKEQKSVTPPKKGGFDVLDLLSKP). Polar residues predominate over residues 261 to 283 (DATQSPPGKTASLPTHSPHPSES). The span at 302–317 (TPTTSSLSTSTTPTLS) shows a compositional bias: low complexity. Residues 394–404 (AEKPEVKKEQK) show a composition bias toward basic and acidic residues.

Sumoylated. In terms of tissue distribution, expressed in body wall muscles and a subset of pharyngeal neurons. Expressed in head neurons and occassionally tail neurons. Not expressed in the pharynx.

The protein localises to the nucleus. Functionally, involved in the transcriptional regulation of genes required for the development of pharyngeal muscles derived from the ABa lineage. Acts as a transcriptional repressor and binds to T-box binding sites in its own promoter to negatively autoregulate its own expression in neurons, seam cells and the gut in order to restrict its expression to certain tissues. May function together with the nfya-1-NF-Y complex to repress its own expression. Plays a role in neural fate specification in the hermaphrodite-specific neuron (HSN)/PHB neuron lineage, acting in concert with homeobox protein egl-5 and the asymmetric cell division protein ham-1. The chain is T-box protein 2 from Caenorhabditis elegans.